A 578-amino-acid chain; its full sequence is Paraneoplastic antigen Ma6F (578 aa).

Disordered regions lie at residues 106 to 221 (AQPQ…AGAA) and 441 to 578 (AAPV…PPGK). A compositionally biased stretch (low complexity) spans 112-129 (AVARGAGEAGAAGEAGSV). A compositionally biased stretch (gly residues) spans 147-159 (GGIGEAGGVGEAG). Positions 160–173 (AAGEAGAAGEAGAA) are enriched in low complexity. The segment covering 174–211 (GEAGGAGEAGGAGEAGGAGEEGGTGEEGGAGEAGGAGE) has biased composition (gly residues). The segment covering 449–461 (PAAAQASPAQGDA) has biased composition (low complexity). Composition is skewed to acidic residues over residues 462 to 473 (SEADPGAEDADE) and 556 to 566 (EESENEDEDGA).

This chain is Paraneoplastic antigen Ma6F, found in Homo sapiens (Human).